We begin with the raw amino-acid sequence, 397 residues long: Succinate--CoA ligase [ADP-forming] subunit beta (397 aa).

An ATP-grasp domain is found at 9 to 254 (KALLKGYGAP…ETEEDAKEIE (246 aa)). Residues Lys46, 53 to 55 (GRG), Glu109, Ala112, and Glu117 each bind ATP. The Mg(2+) site is built by Asn209 and Asp223. Residues Asn274 and 331 to 333 (GIM) each bind substrate.

Belongs to the succinate/malate CoA ligase beta subunit family. As to quaternary structure, heterotetramer of two alpha and two beta subunits. The cofactor is Mg(2+).

The catalysed reaction is succinate + ATP + CoA = succinyl-CoA + ADP + phosphate. It carries out the reaction GTP + succinate + CoA = succinyl-CoA + GDP + phosphate. It participates in carbohydrate metabolism; tricarboxylic acid cycle; succinate from succinyl-CoA (ligase route): step 1/1. Functionally, succinyl-CoA synthetase functions in the citric acid cycle (TCA), coupling the hydrolysis of succinyl-CoA to the synthesis of either ATP or GTP and thus represents the only step of substrate-level phosphorylation in the TCA. The beta subunit provides nucleotide specificity of the enzyme and binds the substrate succinate, while the binding sites for coenzyme A and phosphate are found in the alpha subunit. This Rhizobium leguminosarum bv. trifolii (strain WSM2304) protein is Succinate--CoA ligase [ADP-forming] subunit beta.